A 533-amino-acid chain; its full sequence is Retinoid isomerohydrolase (533 aa).

Serine 2 bears the N-acetylserine mark. Threonine 101 and threonine 105 each carry phosphothreonine. The S-palmitoyl cysteine; in membrane form moiety is linked to residue cysteine 112. Position 113 is an N6-acetyllysine (lysine 113). Phosphoserine is present on serine 117. Histidine 180 is a Fe cation binding site. A lipid anchor (S-palmitoyl cysteine; in membrane form) is attached at cysteine 231. Fe cation-binding residues include histidine 241 and histidine 313. Residues cysteine 329 and cysteine 330 are each lipidated (S-palmitoyl cysteine; in membrane form). Histidine 527 lines the Fe cation pocket.

The protein belongs to the carotenoid oxygenase family. Interacts with MYO7A; this mediates light-dependent intracellular transport of RPE65. Fe(2+) serves as cofactor. In terms of processing, palmitoylation by LRAT regulates ligand binding specificity; the palmitoylated form (membrane form) specifically binds all-trans-retinyl-palmitate, while the soluble unpalmitoylated form binds all-trans-retinol (vitamin A). As to expression, retinal pigment epithelium specific.

The protein resides in the cytoplasm. It is found in the cell membrane. The protein localises to the microsome membrane. The catalysed reaction is an all-trans-retinyl ester + H2O = 11-cis-retinol + a fatty acid + H(+). It catalyses the reaction lutein = (3R,3'S)-zeaxanthin. The enzyme catalyses all-trans-retinyl hexadecanoate + H2O = 11-cis-retinol + hexadecanoate + H(+). Critical isomerohydrolase in the retinoid cycle involved in regeneration of 11-cis-retinal, the chromophore of rod and cone opsins. Catalyzes the cleavage and isomerization of all-trans-retinyl fatty acid esters to 11-cis-retinol which is further oxidized by 11-cis retinol dehydrogenase to 11-cis-retinal for use as visual chromophore. Essential for the production of 11-cis retinal for both rod and cone photoreceptors. Also capable of catalyzing the isomerization of lutein to meso-zeaxanthin an eye-specific carotenoid. The soluble form binds vitamin A (all-trans-retinol), making it available for LRAT processing to all-trans-retinyl ester. The membrane form, palmitoylated by LRAT, binds all-trans-retinyl esters, making them available for IMH (isomerohydrolase) processing to all-cis-retinol. The soluble form is regenerated by transferring its palmitoyl groups onto 11-cis-retinol, a reaction catalyzed by LRAT. The sequence is that of Retinoid isomerohydrolase (RPE65) from Bos taurus (Bovine).